A 78-amino-acid chain; its full sequence is uncharacterized protein (78 aa).

Residues 21–43 (SPFLFGAPLVGGLLGGFLGSALF) traverse the membrane as a helical segment.

It localises to the membrane. This is an uncharacterized protein from Bacillus subtilis (strain 168).